The sequence spans 303 residues: MSSEPSASGKCVLYTTKGELQIELWAKECPKTVRSFLQSIQDGKWDGIVLGKVAEDAVWAPAGLCACSAEINGRLRFNRRGLVGMAPGQDQPFFTLASRGELDGRAVVFGTLVGQSVYRLMEIAQGEVGDDGKTFVYPAEVRRAEVTIPYFDGLSGQKRRAEPEQQAAPRPRKIATRVRLEYEESEDEASDPPLDVRIRAAHDILQDERLTDALHGDSPPPRPAEAPRGSDSAPCVASPDRRAEAAPPTDGPPSRCASLAGPAPASPGPVTDLAPQLSAREQGTLSSLAEFRCKRGGKNPLLG.

Positions 7–153 (ASGKCVLYTT…AEVTIPYFDG (147 aa)) constitute a PPIase cyclophilin-type domain. 2 disordered regions span residues 155–195 (SGQK…PPLD) and 208–274 (ERLT…TDLA).

The protein belongs to the cyclophilin-type PPIase family. CWC27 subfamily. In terms of assembly, associated with the spliceosome.

Its subcellular location is the cytoplasm. The protein localises to the nucleus. The catalysed reaction is [protein]-peptidylproline (omega=180) = [protein]-peptidylproline (omega=0). Its function is as follows. PPIases accelerate the folding of proteins. It catalyzes the cis-trans isomerization of proline imidic peptide bonds in oligopeptides. Involved in pre-mRNA splicing. The chain is Peptidyl-prolyl isomerase CWC27 (CWC27) from Eremothecium gossypii (strain ATCC 10895 / CBS 109.51 / FGSC 9923 / NRRL Y-1056) (Yeast).